A 1782-amino-acid polypeptide reads, in one-letter code: Vitellogenin receptor (1782 aa).

The signal sequence occupies residues 1–18 (MRFIVLLFICSFIYPCYV). Residues 19–1663 (SSIGFRRISK…SINFSRNTRN (1645 aa)) are Extracellular-facing. 3 LDL-receptor class A domains span residues 35 to 72 (KCED…FECD), 81 to 118 (TCAK…DGCV), and 122 to 157 (NCTN…WNCK). Disulfide bonds link Cys-36–Cys-48, Cys-43–Cys-61, Cys-55–Cys-71, Cys-82–Cys-94, Cys-89–Cys-107, and Cys-101–Cys-117. Asn-122 carries N-linked (GlcNAc...) asparagine glycosylation. 3 disulfides stabilise this stretch: Cys-123–Cys-134, Cys-129–Cys-147, and Cys-141–Cys-156. Residue Asn-159 is glycosylated (N-linked (GlcNAc...) asparagine). An LDL-receptor class A 4 domain is found at 166–205 (SCKTENYQYMCANHRCISLKVVCDKKDDCGDGSDEGPGCT). 3 cysteine pairs are disulfide-bonded: Cys-167–Cys-181, Cys-176–Cys-194, and Cys-188–Cys-204. N-linked (GlcNAc...) asparagine glycosylation is found at Asn-208 and Asn-239. The EGF-like 1 domain occupies 208 to 243 (NCSSAGCQSNCHQTPKGSVCTCKPGYKLQKDNRTCN). Residues 244-283 (DIDECQAYGICDQDCMNVPGSYACTCQREYYLENDKRTCK) form the EGF-like; calcium-binding domain. Intrachain disulfides connect Cys-248/Cys-258, Cys-254/Cys-267, and Cys-269/Cys-282. 5 LDL-receptor class B repeats span residues 327–374 (DYVY…DWIT), 375–416 (KNIY…LPTQ), 417–460 (GKMY…DYPN), 461–501 (ERLY…TVFQ), and 502–544 (NKLY…DHSA). In terms of domain architecture, EGF-like 2 spans 552–588 (PCYSNPCSQLCMLNQNKGYTCGCTLDKKLNADKHTCQ). N-linked (GlcNAc...) asparagine glycosylation is found at Asn-702, Asn-859, Asn-896, and Asn-923. The region spanning 889-927 (DCQKNNGNCSHVCLPSLITSFICACPPGMELSNDNRTCI) is the EGF-like 3 domain. LDL-receptor class A domains follow at residues 931 to 969 (ECSK…SECR), 973 to 1009 (RCKE…QNCE), 1012 to 1049 (KCKS…EDCR), 1052 to 1090 (ECTS…EKCY), and 1094 to 1131 (ACKM…VHCL). Intrachain disulfides connect Cys-932–Cys-945, Cys-939–Cys-958, Cys-952–Cys-968, Cys-974–Cys-986, Cys-981–Cys-999, Cys-993–Cys-1008, Cys-1013–Cys-1026, Cys-1020–Cys-1039, Cys-1033–Cys-1048, Cys-1053–Cys-1065, Cys-1060–Cys-1078, Cys-1072–Cys-1089, Cys-1095–Cys-1108, Cys-1103–Cys-1121, and Cys-1115–Cys-1130. 2 N-linked (GlcNAc...) asparagine glycosylation sites follow: Asn-1133 and Asn-1140. LDL-receptor class A domains follow at residues 1140–1177 (NCSL…QNCT), 1178–1214 (YCFE…KNCD), and 1225–1260 (ECDE…GKCQ). Cystine bridges form between Cys-1141–Cys-1154, Cys-1148–Cys-1167, Cys-1161–Cys-1176, Cys-1179–Cys-1191, Cys-1186–Cys-1204, Cys-1198–Cys-1213, Cys-1226–Cys-1236, Cys-1231–Cys-1249, and Cys-1243–Cys-1259. Asn-1175 carries N-linked (GlcNAc...) asparagine glycosylation. Residues 1262–1298 (ACTVNNFCKGMCYKTPAGAVCGCQSGYRLAVDMISCE) enclose the EGF-like 4 domain. LDL-receptor class B repeat units follow at residues 1385–1425 (DSVY…DWIT), 1471–1518 (RWLF…DHVK), and 1519–1561 (SKLY…FEQS). 3 N-linked (GlcNAc...) asparagine glycosylation sites follow: Asn-1626, Asn-1640, and Asn-1656. Residues 1664 to 1684 (ISGIYSITIIVLLVSVLLLCV) form a helical membrane-spanning segment. The Cytoplasmic segment spans residues 1685–1782 (YYYYQKNKLK…ALIYFVHNSK (98 aa)).

In terms of tissue distribution, expressed in ovaries of reproductive females.

The protein localises to the membrane. Its function is as follows. Involved in uptake of vitellogenin by endocytosis. Expression is regulated by the juvenile hormone analog, methoprene (in vitro). The protein is Vitellogenin receptor of Solenopsis invicta (Red imported fire ant).